The sequence spans 351 residues: Methionine import ATP-binding protein MetN (351 aa).

Residues I2 to T241 form the ABC transporter domain. G38 to S45 contributes to the ATP binding site.

This sequence belongs to the ABC transporter superfamily. Methionine importer (TC 3.A.1.24) family. In terms of assembly, the complex is composed of two ATP-binding proteins (MetN), two transmembrane proteins (MetI) and a solute-binding protein (MetQ).

It is found in the cell inner membrane. The enzyme catalyses L-methionine(out) + ATP + H2O = L-methionine(in) + ADP + phosphate + H(+). It carries out the reaction D-methionine(out) + ATP + H2O = D-methionine(in) + ADP + phosphate + H(+). Its function is as follows. Part of the ABC transporter complex MetNIQ involved in methionine import. Responsible for energy coupling to the transport system. This chain is Methionine import ATP-binding protein MetN, found in Coxiella burnetii (strain RSA 493 / Nine Mile phase I).